Reading from the N-terminus, the 694-residue chain is Polyribonucleotide nucleotidyltransferase (694 aa).

Residues Asp485 and Asp491 each coordinate Mg(2+). The region spanning 552–611 (PRIETMQIKPNKIATVIGPGGKQIRQIIEEAGVQIDINDSGLVSISASSPQAIEKAKSMI) is the KH domain. The 69-residue stretch at 621–689 (GKIYEGRVTS…EKGQYKLSHK (69 aa)) folds into the S1 motif domain.

It belongs to the polyribonucleotide nucleotidyltransferase family. Mg(2+) is required as a cofactor.

It is found in the cytoplasm. It carries out the reaction RNA(n+1) + phosphate = RNA(n) + a ribonucleoside 5'-diphosphate. In terms of biological role, involved in mRNA degradation. Catalyzes the phosphorolysis of single-stranded polyribonucleotides processively in the 3'- to 5'-direction. This is Polyribonucleotide nucleotidyltransferase from Chlamydia caviae (strain ATCC VR-813 / DSM 19441 / 03DC25 / GPIC) (Chlamydophila caviae).